The chain runs to 362 residues: 3-dehydroquinate synthase (362 aa).

NAD(+) contacts are provided by residues 72-77, 106-110, 130-131, Lys-143, Lys-152, and 170-173; these read DGEQYK, GVVGD, TT, and CLKT. The Zn(2+) site is built by Glu-185, His-248, and His-265.

It belongs to the sugar phosphate cyclases superfamily. Dehydroquinate synthase family. It depends on Co(2+) as a cofactor. Requires Zn(2+) as cofactor. The cofactor is NAD(+).

It is found in the cytoplasm. The enzyme catalyses 7-phospho-2-dehydro-3-deoxy-D-arabino-heptonate = 3-dehydroquinate + phosphate. The protein operates within metabolic intermediate biosynthesis; chorismate biosynthesis; chorismate from D-erythrose 4-phosphate and phosphoenolpyruvate: step 2/7. Catalyzes the conversion of 3-deoxy-D-arabino-heptulosonate 7-phosphate (DAHP) to dehydroquinate (DHQ). The chain is 3-dehydroquinate synthase from Aliivibrio salmonicida (strain LFI1238) (Vibrio salmonicida (strain LFI1238)).